A 425-amino-acid chain; its full sequence is Elongation factor 1-alpha (425 aa).

A tr-type G domain is found at 5–221 (KPHMNLAVIG…DTFKEPSKPT (217 aa)). Positions 14-21 (GHIDHGKS) are G1. Residue 14–21 (GHIDHGKS) coordinates GTP. Ser-21 contributes to the Mg(2+) binding site. The G2 stretch occupies residues 70–74 (GITID). Residues 91–94 (DCPG) are G3. GTP is bound by residues 91 to 95 (DCPGH) and 146 to 149 (NKMD). The segment at 146–149 (NKMD) is G4. The segment at 185–187 (SSL) is G5.

Belongs to the TRAFAC class translation factor GTPase superfamily. Classic translation factor GTPase family. EF-Tu/EF-1A subfamily.

Its subcellular location is the cytoplasm. The enzyme catalyses GTP + H2O = GDP + phosphate + H(+). In terms of biological role, GTP hydrolase that promotes the GTP-dependent binding of aminoacyl-tRNA to the A-site of ribosomes during protein biosynthesis. In Methanoregula boonei (strain DSM 21154 / JCM 14090 / 6A8), this protein is Elongation factor 1-alpha.